The primary structure comprises 37 residues: MTTLNNLPSILVTLVGLVFPAFAMASLFLHVQKNKIL.

A helical transmembrane segment spans residues 9–29 (SILVTLVGLVFPAFAMASLFL).

This sequence belongs to the PsaI family.

It localises to the plastid. The protein resides in the chloroplast thylakoid membrane. Functionally, may help in the organization of the PsaL subunit. The chain is Photosystem I reaction center subunit VIII from Pelargonium hortorum (Common geranium).